Reading from the N-terminus, the 242-residue chain is UPF0246 protein SSA_1395 (242 aa).

The protein belongs to the UPF0246 family.

This is UPF0246 protein SSA_1395 from Streptococcus sanguinis (strain SK36).